The primary structure comprises 295 residues: Glycine--tRNA ligase alpha subunit (295 aa).

Belongs to the class-II aminoacyl-tRNA synthetase family. Tetramer of two alpha and two beta subunits.

The protein localises to the cytoplasm. The enzyme catalyses tRNA(Gly) + glycine + ATP = glycyl-tRNA(Gly) + AMP + diphosphate. This Thermosynechococcus vestitus (strain NIES-2133 / IAM M-273 / BP-1) protein is Glycine--tRNA ligase alpha subunit.